We begin with the raw amino-acid sequence, 341 residues long: Short chain dehydrogenase FGM9 (341 aa).

NADP(+) contacts are provided by L38, K63, D88, and N114. Catalysis depends on proton donor residues S167 and Y200. Y200 and K204 together coordinate NADP(+). The Lowers pKa of active site Tyr role is filled by K204.

The protein belongs to the short-chain dehydrogenases/reductases (SDR) family.

The protein operates within secondary metabolite biosynthesis. In terms of biological role, short chain dehydrogenase; part of the Fg3_54/C64 gene cluster that mediates the biosynthesis of the octapeptide fusaoctaxin A, a virulence factor that is required for cell-to-cell invasiveness of plant host. The 2 nonribosomal peptide synthetases NRPS9 and NRPS5 form an assembly line which likely utilizes GABA as a starter unit (loaded on the unique module M1 of NRPS9) and sequentially incorporates seven extender units composed of the residues L-Ala, L-allo-Ile, L-Ser, L-Val, L-Ser, L-Leu and L-Leu, respectively. During the process, each of the residues that are tethered on modules M3-M7 of NRPS5 containing an E domain can undergo an epimerization reaction to produce a D-configuration before the transpeptidation reaction occurs. The elongation of the peptidyl chain might be terminated by module M8-mediated L-Leu incorporation, followed by R domain-catalyzed 4 electron reduction to release the resulting octapeptide from the assembly line as an alcohol. Fusaoctaxin A is cleaved by the cluster specific ABC transporter FGM5 to the pentapeptide fusapentaxin A and the tripeptide fusatrixin A. The other enzymes from the cluster, FGM1, FGM2, FGM3 and FGM9 seem not to be involved in the biosynthesis of fusaoctaxin A and their functions have still to be determined. The sequence is that of Short chain dehydrogenase FGM9 from Gibberella zeae (strain ATCC MYA-4620 / CBS 123657 / FGSC 9075 / NRRL 31084 / PH-1) (Wheat head blight fungus).